The chain runs to 1363 residues: Zinc finger protein 541 (1363 aa).

Disordered stretches follow at residues 1–23 and 106–137; these read MEPYSLGEEGALPSEGHLPSFSE and LGALKVPKEADEGGRATGSTRKGKRQHSSPQN. C2H2-type zinc fingers lie at residues 140 to 162, 168 to 190, and 196 to 221; these read LDCSLCGKVFSSASSLSKHYLTH, HVCKVCSKAFKRQDHLTGHMLTH, and FVCIEQGCSKSYCDYRSLRRHYEVQH. Disordered regions lie at residues 232-269, 286-387, 440-532, and 574-741; these read EEEAYGDPTHNHDVANQPPPSGLRSLGPPEARSPGSVL, KIPS…GWPE, VASR…PGGL, and QVAT…GYRL. Polar residues predominate over residues 311-321; it reads SLGSSSCTPAS. Over residues 335 to 345 the composition is skewed to basic and acidic residues; it reads EETHPPRKEAA. The segment covering 453-465 has biased composition (low complexity); that stretch reads PSSTPTSVEPSPS. Residues 597–608 are compositionally biased toward pro residues; that stretch reads GPWPPQTLPPAP. Low complexity predominate over residues 659–670; it reads PPSLTGPGLLPS. Residues 838–860 form a C2H2-type 4 zinc finger; that stretch reads FVCKNCSQMFYTEKGLSSHMCFH. The segment at 935 to 978 is disordered; that stretch reads QGQEKDGEERDSKESCQYRKRKKRPQPKALFAPPAPSALGEPGP. Residues 937–951 are compositionally biased toward basic and acidic residues; sequence QEKDGEERDSKESCQ. An ELM2 domain is found at 1063–1155; it reads PHINVGSRFQ…VALETLLLRG (93 aa). The SANT domain maps to 1170–1221; sequence TGSDIWTPMEKRLFKKAFCAHKKDFYLIHKMIQTKSVAQCVEYYYIWKKMVK. The disordered stretch occupies residues 1243 to 1298; the sequence is RTEDKVTCSPRERPTHRPTPELKIKTKSYRRESILHSSPSAAPKRTPEPPGSVESQ. A compositionally biased stretch (basic and acidic residues) spans 1244–1276; sequence TEDKVTCSPRERPTHRPTPELKIKTKSYRRESI. The segment at 1301–1323 adopts a C2H2-type 5 zinc-finger fold; that stretch reads FPCRECERVFDKIKSRNAHMKRH. The tract at residues 1343–1363 is disordered; sequence LKEEEEEEEEELGADMGPLQW. Residues 1345–1355 show a composition bias toward acidic residues; sequence EEEEEEEEELG.

As to quaternary structure, interacts with DNTTIP1. Identified in a complex with KCTD19, HDAC1 and HSPA2. Identified in a complex with HDAC1, HDAC2, DNTTIP1 and KCTD19. Identified in a complex with KCTD19 and HDAC1. In terms of tissue distribution, germ-cell-specific. Specifically present in testicular spermatogenic cells, but not in testicular and mature sperm. During spermatogenesis, it is present in spermatocytes and round spermatids only (at protein level).

Its subcellular location is the nucleus. Transcription regulator which is essential for male fertility and for the completion of meiotic prophase in spermatocytes. Regulates progression of the pachytene stage of meiotic prophase by activating the expression of genes involved in meiosis and post-meiosis during spermatogenesis. Maintains the repression of pre-pachytene transcriptional programs, including meiotic double-strand breaks (DSB) formation genes in pachytene spermatocytes and suppresses aberrant DSB formation after mid-pachytene, thus ensuring meiosis progression. The sequence is that of Zinc finger protein 541 (Znf541) from Mus musculus (Mouse).